Reading from the N-terminus, the 232-residue chain is Sugar fermentation stimulation protein homolog (232 aa).

The protein belongs to the SfsA family.

This chain is Sugar fermentation stimulation protein homolog, found in Alkaliphilus metalliredigens (strain QYMF).